We begin with the raw amino-acid sequence, 676 residues long: UvrABC system protein B (676 aa).

The 389-residue stretch at 26–414 folds into the Helicase ATP-binding domain; sequence EGLDAGLAHQ…SAGEIADQVV (389 aa). 39–46 contributes to the ATP binding site; that stretch reads GVTGSGKT. The Beta-hairpin signature appears at 92-115; sequence YYDYYQPEAYVPTTDTFIEKDSSV. Positions 432–598 constitute a Helicase C-terminal domain; sequence QVDDLLSEIR…ALKRNIKDIM (167 aa). A UVR domain is found at 636 to 671; that stretch reads EKEITKLEAQMYKHAQDLEFELAAQKRDEIEKLRQQ.

This sequence belongs to the UvrB family. In terms of assembly, forms a heterotetramer with UvrA during the search for lesions. Interacts with UvrC in an incision complex.

The protein localises to the cytoplasm. The UvrABC repair system catalyzes the recognition and processing of DNA lesions. A damage recognition complex composed of 2 UvrA and 2 UvrB subunits scans DNA for abnormalities. Upon binding of the UvrA(2)B(2) complex to a putative damaged site, the DNA wraps around one UvrB monomer. DNA wrap is dependent on ATP binding by UvrB and probably causes local melting of the DNA helix, facilitating insertion of UvrB beta-hairpin between the DNA strands. Then UvrB probes one DNA strand for the presence of a lesion. If a lesion is found the UvrA subunits dissociate and the UvrB-DNA preincision complex is formed. This complex is subsequently bound by UvrC and the second UvrB is released. If no lesion is found, the DNA wraps around the other UvrB subunit that will check the other stand for damage. This is UvrABC system protein B from Vibrio vulnificus (strain CMCP6).